An 864-amino-acid chain; its full sequence is MKTVFKSLLLLHFLLLLLLCFVSPSSFFLLKVPVGGLVACRLRQSQAFMQFKDEFDTRHCNHSDDFNGVWCDNSTGAVTVLQLRDCLSGTLKSNSSLFGFHQLRYLALNRNNFTSASLPSEFCNLNKLKLLSLFSNGFIDLSHNDLMGSFPLVRNLGKLAVLDLSDNHFSGTLNPNNSLFELHSLRYLNLAFNNISSSLPSKFGNLNKLEVLSLSFNGFSGQCFPTISNLTRITQLYLHNNELTGSFPLVQNLTKLSFLGLSDNLFSGTIPSYLFTFPSLSTLDLRENDLSGSIEVPNSSTSSKLEIMYLGFNHLEGKILEPISKLINLKRLDLSFLNTSYPIDLNLLSPLKSLSYLDFSGNSLSPASLSSSSYIPLSMESIVLSLCGIREFPNILKHLQNLIHIDITSNQIKGKIPEWLWTLPQLSFVDISNNSFNGFQGSAEVFVNLSVRILMLDANNFEGALPTLPLSIIGFSAIHNSFTGEIPLSICNRTSLTMVDLSYNNFTGPIPQCLSNFMFVNLRKNDLEGSIPDTFYTDSSLKSLDVGYNRLTGKLPRSLLNCSSLRFLSVDNNRVKDTFPFWLKALPNLRVLTLRSNKFYGPISPPHQGPLGFPELRIFEIADNMFTGSLPPSFFVNWKASALTKNEDGGLYMVYEYDKAANSPVRYTYTDTIDLQYKGLHMEQERVLTSYAAIDFSGNRLQGQIPESIGLLKALIALNLSNNAFTGHIPLSFANLMNLESLDMSGNQLSGTIPNGLGSLSFLVYISVAHNKLKGEIPQGTQITGQIKSSFEGNAGLCGLPLQETCFDSSVPPIQPKQEDEEKGEVINWKAVAIGYAPGLLFGLAIAHLIASYKPEWLVKIIGF.

Positions 1-29 (MKTVFKSLLLLHFLLLLLLCFVSPSSFFL) are cleaved as a signal peptide. The Extracellular segment spans residues 30–830 (LKVPVGGLVA…EEKGEVINWK (801 aa)). N61, N73, N94, and N112 each carry an N-linked (GlcNAc...) asparagine glycan. LRR repeat units lie at residues 100 to 125 (FHQL…FCNL), 127 to 148 (KLKL…DLMG), 156 to 182 (LGKL…LFEL), 183 to 205 (HSLR…KFGN), 207 to 229 (NKLE…TISN), 230 to 253 (LTRI…VQNL), 254 to 277 (TKLS…LFTF), 279 to 303 (SLST…STSS), 305 to 326 (LEIM…ISKL), 327 to 350 (INLK…LLSP), 351 to 376 (LKSL…SYIP), 378 to 398 (SMES…ILKH), 399 to 423 (LQNL…LWTL), 425 to 448 (QLSF…VFVN), and 449 to 472 (LSVR…PLSI). N-linked (GlcNAc...) asparagine glycans are attached at residues N176, N194, N229, and N252. N298 is a glycosylation site (N-linked (GlcNAc...) asparagine). N338 is a glycosylation site (N-linked (GlcNAc...) asparagine). N-linked (GlcNAc...) asparagine glycosylation is found at N433 and N448. An LRR 16; degenerate repeat occupies 473 to 492 (IGFSAIHNSFTGEIPLSICN). N492 and N505 each carry an N-linked (GlcNAc...) asparagine glycan. LRR repeat units follow at residues 493 to 514 (RTSL…PQCL), 515 to 538 (SNFM…FYTD), 539 to 562 (SSLK…LLNC), 564 to 585 (SLRF…WLKA), 586 to 610 (LPNL…HQGP), 613 to 637 (FPEL…FFVN), 688 to 712 (LTSY…IGLL), 713 to 735 (KALI…SFAN), 736 to 760 (LMNL…LGSL), and 762 to 785 (FLVY…QITG). N-linked (GlcNAc...) asparagine glycosylation is present at N561. N-linked (GlcNAc...) asparagine glycosylation occurs at N719. The chain crosses the membrane as a helical span at residues 831–851 (AVAIGYAPGLLFGLAIAHLIA). Over 852 to 864 (SYKPEWLVKIIGF) the chain is Cytoplasmic.

The protein belongs to the RLP family.

The protein resides in the cell membrane. This Arabidopsis thaliana (Mouse-ear cress) protein is Receptor like protein 24.